The following is a 163-amino-acid chain: Nucleotide-binding protein Dhaf_3127 (163 aa).

It belongs to the YajQ family.

Its function is as follows. Nucleotide-binding protein. In Desulfitobacterium hafniense (strain DSM 10664 / DCB-2), this protein is Nucleotide-binding protein Dhaf_3127.